A 158-amino-acid chain; its full sequence is Rhombotin-2 (158 aa).

2 LIM zinc-binding domains span residues Leu-28–Gln-90 and Gly-92–Leu-154.

Expression becomes restricted to the ventral blood island (VBI) as the embryo develops. In late neurula and early tailbud embryos, also expressed in the dorsal lateral plate (DLP), the site of definitive hematopoiesis in the tadpole. Expression in the DLP diminishes during tailbud stages. Expressed in circulating blood cells of tadpoles. Also expressed in non-hematopoietic sites, including the tailbud region and the central nervous system of early neurula embryos.

It localises to the nucleus. Functionally, transcription factor that acts synergistically with tal1/scl and gata1 to specify embryonic dorsal mesoderm to a hematopoietic fate. Induces globin gene expression together with fgf. The chain is Rhombotin-2 from Xenopus laevis (African clawed frog).